The following is a 600-amino-acid chain: DNA mismatch repair protein MutL (600 aa).

A disordered region spans residues 327–405 (DGSRAATTGA…FSPQPAAAEP (79 aa)). A compositionally biased stretch (polar residues) spans 349–367 (PNSQRPQTAWSAETSSSRP).

This sequence belongs to the DNA mismatch repair MutL/HexB family.

In terms of biological role, this protein is involved in the repair of mismatches in DNA. It is required for dam-dependent methyl-directed DNA mismatch repair. May act as a 'molecular matchmaker', a protein that promotes the formation of a stable complex between two or more DNA-binding proteins in an ATP-dependent manner without itself being part of a final effector complex. The polypeptide is DNA mismatch repair protein MutL (Rhizobium johnstonii (strain DSM 114642 / LMG 32736 / 3841) (Rhizobium leguminosarum bv. viciae)).